The chain runs to 321 residues: Probable cell division protein WhiA (321 aa).

A DNA-binding region (H-T-H motif) is located at residues 276 to 309 (NLKELGELLEPPVGKSGVNHRLRKLEKIAEQLHQ).

The protein belongs to the WhiA family.

Its function is as follows. Involved in cell division and chromosome segregation. The chain is Probable cell division protein WhiA from Natranaerobius thermophilus (strain ATCC BAA-1301 / DSM 18059 / JW/NM-WN-LF).